Here is a 364-residue protein sequence, read N- to C-terminus: Histidinol-phosphate aminotransferase (364 aa).

Lys-225 is subject to N6-(pyridoxal phosphate)lysine.

Belongs to the class-II pyridoxal-phosphate-dependent aminotransferase family. Histidinol-phosphate aminotransferase subfamily. In terms of assembly, homodimer. It depends on pyridoxal 5'-phosphate as a cofactor.

The catalysed reaction is L-histidinol phosphate + 2-oxoglutarate = 3-(imidazol-4-yl)-2-oxopropyl phosphate + L-glutamate. Its pathway is amino-acid biosynthesis; L-histidine biosynthesis; L-histidine from 5-phospho-alpha-D-ribose 1-diphosphate: step 7/9. This Sulfurovum sp. (strain NBC37-1) protein is Histidinol-phosphate aminotransferase.